Reading from the N-terminus, the 510-residue chain is Probable lipid II flippase MurJ (510 aa).

Transmembrane regions (helical) follow at residues 13–33 (DVVI…LFAN), 81–101 (GLVS…AALF), 130–150 (FPYL…NTIG), 154–174 (VMSF…LFLA), 182–202 (LALA…QIPF), 240–260 (INLL…ISWL), 266–286 (LLEF…LPTL), 315–335 (IFLL…PMLL), 357–377 (AFNA…GYYA), 396–416 (MGFN…ASAM), 443–463 (VFFV…WYYV), and 481–501 (LVWL…LLGV).

This sequence belongs to the MurJ/MviN family.

The protein localises to the cell inner membrane. It functions in the pathway cell wall biogenesis; peptidoglycan biosynthesis. Involved in peptidoglycan biosynthesis. Transports lipid-linked peptidoglycan precursors from the inner to the outer leaflet of the cytoplasmic membrane. In Haemophilus influenzae (strain ATCC 51907 / DSM 11121 / KW20 / Rd), this protein is Probable lipid II flippase MurJ.